We begin with the raw amino-acid sequence, 532 residues long: Probable cytochrome c oxidase subunit 1 (532 aa).

8 helical membrane passes run 33–53 (IMYI…SLLF), 74–94 (VLIT…ALFG), 95–115 (GFGN…FPRL), 118–138 (ISFW…FVDG), 163–183 (MAIF…INLI), 200–220 (PLFV…MPVL), 252–272 (LFWF…FGIV), and 284–304 (IFGY…GFIV). His-79 serves as a coordination point for Fe(II)-heme a. Cu cation contacts are provided by His-258 and Tyr-262. 2 residues coordinate Cu cation: His-307 and His-308. The next 2 helical transmembrane spans lie at 318–338 (ALIY…IKIF) and 355–375 (MLFS…GIIL). Residue His-393 coordinates heme a3. The next 3 helical transmembrane spans lie at 394–414 (FHYT…YYWF), 431–451 (FWIT…LGLA), and 473–493 (IGAG…FYTL). His-395 provides a ligand contact to Fe(II)-heme a.

This sequence belongs to the heme-copper respiratory oxidase family.

It is found in the cell membrane. It carries out the reaction 4 Fe(II)-[cytochrome c] + O2 + 8 H(+)(in) = 4 Fe(III)-[cytochrome c] + 2 H2O + 4 H(+)(out). Its pathway is energy metabolism; oxidative phosphorylation. In terms of biological role, cytochrome c oxidase is the component of the respiratory chain that catalyzes the reduction of oxygen to water. Subunits 1-3 form the functional core of the enzyme complex. CO I is the catalytic subunit of the enzyme. Electrons originating in cytochrome c are transferred via the copper A center of subunit 2 and heme A of subunit 1 to the bimetallic center formed by heme A3 and copper B. The protein is Probable cytochrome c oxidase subunit 1 (ctaD) of Rickettsia conorii (strain ATCC VR-613 / Malish 7).